The sequence spans 266 residues: MLTKRIIACLDVTGGRVVKGVNFVGLRDAGDPVAVAARYNAQGADELAFLDITATSDERDLILPIIEAVASQVFIPLTVGGGVRTQADVRRLLNAGADKVSFNSAAIADPQVIDTASAKYGAQCIVVAIDARRRSAEESRRITAGGRAIGPGWDVYSHGGRRNTGLDALAWAVEMQRRGAGEILLTSMDRDGTRIGFDLELTRAVSDAVGLPVIASGGVGTLDHLADGIQTGGADAVLAASIFHYGEYTVGQAKQHLAGRGIAVRR.

Active-site residues include Asp-11 and Asp-130.

It belongs to the HisA/HisF family. As to quaternary structure, heterodimer of HisH and HisF.

Its subcellular location is the cytoplasm. The enzyme catalyses 5-[(5-phospho-1-deoxy-D-ribulos-1-ylimino)methylamino]-1-(5-phospho-beta-D-ribosyl)imidazole-4-carboxamide + L-glutamine = D-erythro-1-(imidazol-4-yl)glycerol 3-phosphate + 5-amino-1-(5-phospho-beta-D-ribosyl)imidazole-4-carboxamide + L-glutamate + H(+). The protein operates within amino-acid biosynthesis; L-histidine biosynthesis; L-histidine from 5-phospho-alpha-D-ribose 1-diphosphate: step 5/9. Functionally, IGPS catalyzes the conversion of PRFAR and glutamine to IGP, AICAR and glutamate. The HisF subunit catalyzes the cyclization activity that produces IGP and AICAR from PRFAR using the ammonia provided by the HisH subunit. This Verminephrobacter eiseniae (strain EF01-2) protein is Imidazole glycerol phosphate synthase subunit HisF.